Consider the following 334-residue polypeptide: Beta-hexosaminidase (334 aa).

Substrate is bound by residues Asp-60, Arg-68, Arg-133, and 163-164 (KH). His-176 functions as the Proton donor/acceptor in the catalytic mechanism. Asp-247 (nucleophile) is an active-site residue.

The protein belongs to the glycosyl hydrolase 3 family. NagZ subfamily.

It localises to the cytoplasm. The enzyme catalyses Hydrolysis of terminal non-reducing N-acetyl-D-hexosamine residues in N-acetyl-beta-D-hexosaminides.. Its pathway is cell wall biogenesis; peptidoglycan recycling. Plays a role in peptidoglycan recycling by cleaving the terminal beta-1,4-linked N-acetylglucosamine (GlcNAc) from peptide-linked peptidoglycan fragments, giving rise to free GlcNAc, anhydro-N-acetylmuramic acid and anhydro-N-acetylmuramic acid-linked peptides. The protein is Beta-hexosaminidase of Xanthomonas axonopodis pv. citri (strain 306).